Reading from the N-terminus, the 491-residue chain is Peptidyl-prolyl isomerase CWC27 (491 aa).

One can recognise a PPIase cyclophilin-type domain in the interval 11-167; that stretch reads TNGKVIIDTT…IPPKIRRIHI (157 aa). Composition is skewed to basic and acidic residues over residues 186-202, 268-298, and 306-316; these read AQQK…EQRE, DLGK…REKA, and AEIKRMEEDLR. 2 disordered regions span residues 186-427 and 464-491; these read AQQK…IEVD and RDLL…GRNR. Residues 277 to 327 adopt a coiled-coil conformation; that stretch reads ASEEKKAVDLKNIRAQHEREKAGGSAARQAEIKRMEEDLRRLKKRSGSVSD. A compositionally biased stretch (low complexity) spans 323–333; sequence GSVSDSESDSS. Over residues 352–367 the composition is skewed to basic residues; sequence ASKRGRAAMKAGNKRG. 2 stretches are compositionally biased toward acidic residues: residues 391-406 and 418-427; these read DEPE…EGEA and AEEEGGIEVD. Basic residues predominate over residues 482 to 491; the sequence is RTVRNSGRNR.

It belongs to the cyclophilin-type PPIase family. CWC27 subfamily. As to quaternary structure, associated with the spliceosome.

It is found in the cytoplasm. The protein resides in the nucleus. It carries out the reaction [protein]-peptidylproline (omega=180) = [protein]-peptidylproline (omega=0). Functionally, PPIases accelerate the folding of proteins. It catalyzes the cis-trans isomerization of proline imidic peptide bonds in oligopeptides. Involved in pre-mRNA splicing. This chain is Peptidyl-prolyl isomerase CWC27 (CWC27), found in Cryptococcus neoformans var. neoformans serotype D (strain B-3501A) (Filobasidiella neoformans).